The following is a 34-amino-acid chain: Beta/mu-theraphotoxin-Pe1a (34 aa).

3 disulfide bridges follow: cysteine 2/cysteine 16, cysteine 9/cysteine 21, and cysteine 15/cysteine 28.

This sequence belongs to the neurotoxin 10 (Hwtx-1) family. 54 (ProTx-1) subfamily. Expressed by the venom gland.

It localises to the secreted. Functionally, ion channel impairing toxin that inhibits voltage-gated sodium channels. The recombinantly expressed toxin shows a weak activity against Nav1.7/SCN9A (25% inhibition at 10 uM), and shifts the voltage dependence of channel activation to more depolarized potentials. This is Beta/mu-theraphotoxin-Pe1a from Phormingochilus everetti (Malaysian purple earth tiger tarantula).